A 317-amino-acid chain; its full sequence is Ribosomal RNA small subunit methyltransferase H (317 aa).

S-adenosyl-L-methionine is bound by residues 39-41 (GGH), Asp-59, Phe-83, Asp-104, and Gln-111.

It belongs to the methyltransferase superfamily. RsmH family.

The protein resides in the cytoplasm. The enzyme catalyses cytidine(1402) in 16S rRNA + S-adenosyl-L-methionine = N(4)-methylcytidine(1402) in 16S rRNA + S-adenosyl-L-homocysteine + H(+). Specifically methylates the N4 position of cytidine in position 1402 (C1402) of 16S rRNA. The sequence is that of Ribosomal RNA small subunit methyltransferase H from Paraburkholderia phymatum (strain DSM 17167 / CIP 108236 / LMG 21445 / STM815) (Burkholderia phymatum).